The following is a 241-amino-acid chain: Glutathione S-transferase omega-1 (241 aa).

Ser-2 is subject to N-acetylserine. A GST N-terminal domain is found at 22–101; the sequence is GLIRVYSMRF…YLDEAYPGKK (80 aa). Catalysis depends on Cys-32, which acts as the Nucleophile. The residue at position 57 (Lys-57) is an N6-acetyllysine. Glutathione is bound by residues Lys-59, Val-72, and 85–86; that span reads ES. In terms of domain architecture, GST C-terminal spans 106-225; the sequence is DPYEKACQKM…HIEPRDLRAF (120 aa). N6-acetyllysine is present on residues Lys-143, Lys-148, and Lys-152.

In terms of assembly, homodimer. As to expression, most abundant in the liver and skeletal muscle; also expressed in heart, diaphragm, colon, thymus, kidney, lung, ovaries, spleen, intestine and pancreas.

It is found in the cytoplasm. The protein localises to the cytosol. It carries out the reaction RX + glutathione = an S-substituted glutathione + a halide anion + H(+). It catalyses the reaction L-dehydroascorbate + 2 glutathione = glutathione disulfide + L-ascorbate. The catalysed reaction is methylarsonate + 2 glutathione + H(+) = methylarsonous acid + glutathione disulfide + H2O. Its function is as follows. Exhibits glutathione-dependent thiol transferase and dehydroascorbate reductase activities. Has S-(phenacyl)glutathione reductase activity. Also has glutathione S-transferase activity. Participates in the biotransformation of inorganic arsenic and reduces monomethylarsonic acid (MMA) and dimethylarsonic acid. The sequence is that of Glutathione S-transferase omega-1 (GSTO1) from Sus scrofa (Pig).